The chain runs to 44 residues: U9-ctenitoxin-Co1a (44 aa).

Disulfide bonds link cysteine 3–cysteine 17, cysteine 10–cysteine 23, cysteine 16–cysteine 33, and cysteine 25–cysteine 31.

In terms of tissue distribution, expressed by the venom gland.

The protein localises to the secreted. Insecticidal neurotoxin that reversibly inhibits the N-methyl-D-aspartate (NMDA)-subtype of ionotropic glutamate receptor (GRIN) and inhibits inactivation of insect sodium channels (Nav). In vivo, is highly toxic to insects. The chain is U9-ctenitoxin-Co1a from Ctenus ornatus (Brazilian spider).